The following is a 240-amino-acid chain: Ribosomal RNA small subunit methyltransferase G (240 aa).

Residues Gly79, Phe84, 130 to 131, and Arg149 each bind S-adenosyl-L-methionine; that span reads AE.

It belongs to the methyltransferase superfamily. RNA methyltransferase RsmG family.

It localises to the cytoplasm. Specifically methylates the N7 position of a guanine in 16S rRNA. The polypeptide is Ribosomal RNA small subunit methyltransferase G (Lactobacillus helveticus (strain DPC 4571)).